We begin with the raw amino-acid sequence, 312 residues long: Methionyl-tRNA formyltransferase (312 aa).

112–115 (SLLP) contacts (6S)-5,6,7,8-tetrahydrofolate.

The protein belongs to the Fmt family.

The catalysed reaction is L-methionyl-tRNA(fMet) + (6R)-10-formyltetrahydrofolate = N-formyl-L-methionyl-tRNA(fMet) + (6S)-5,6,7,8-tetrahydrofolate + H(+). Its function is as follows. Attaches a formyl group to the free amino group of methionyl-tRNA(fMet). The formyl group appears to play a dual role in the initiator identity of N-formylmethionyl-tRNA by promoting its recognition by IF2 and preventing the misappropriation of this tRNA by the elongation apparatus. This is Methionyl-tRNA formyltransferase from Dehalococcoides mccartyi (strain CBDB1).